The sequence spans 577 residues: Isocitrate dehydrogenase kinase/phosphatase (577 aa).

ATP is bound by residues 315-321 (APGIRGM) and Lys336. The active site involves Asp371.

The protein belongs to the AceK family.

It is found in the cytoplasm. It catalyses the reaction L-seryl-[isocitrate dehydrogenase] + ATP = O-phospho-L-seryl-[isocitrate dehydrogenase] + ADP + H(+). Its function is as follows. Bifunctional enzyme which can phosphorylate or dephosphorylate isocitrate dehydrogenase (IDH) on a specific serine residue. This is a regulatory mechanism which enables bacteria to bypass the Krebs cycle via the glyoxylate shunt in response to the source of carbon. When bacteria are grown on glucose, IDH is fully active and unphosphorylated, but when grown on acetate or ethanol, the activity of IDH declines drastically concomitant with its phosphorylation. In Escherichia fergusonii (strain ATCC 35469 / DSM 13698 / CCUG 18766 / IAM 14443 / JCM 21226 / LMG 7866 / NBRC 102419 / NCTC 12128 / CDC 0568-73), this protein is Isocitrate dehydrogenase kinase/phosphatase.